The sequence spans 182 residues: uncharacterized protein (182 aa).

Belongs to the DNA 3' phosphatase family.

This is an uncharacterized protein from Autographa californica nuclear polyhedrosis virus (AcMNPV).